The sequence spans 119 residues: MFKKQSRQKGREKRHLRIRKNIFGTPEMPRLSVYRSEKNIYAQIIDDLNGVTLVAASSLDKEFDAKGSNKDGAKLVGELVAKRAIEKGVTKVVFDRGGYIYHGRVQELAEGAREAGLQF.

Belongs to the universal ribosomal protein uL18 family. As to quaternary structure, part of the 50S ribosomal subunit; part of the 5S rRNA/L5/L18/L25 subcomplex. Contacts the 5S and 23S rRNAs.

Functionally, this is one of the proteins that bind and probably mediate the attachment of the 5S RNA into the large ribosomal subunit, where it forms part of the central protuberance. In Clostridium tetani (strain Massachusetts / E88), this protein is Large ribosomal subunit protein uL18.